The sequence spans 189 residues: Isopentenyl-diphosphate Delta-isomerase 2 (189 aa).

Mn(2+) is bound by residues His24 and His30. The region spanning 28 to 160 (ALHRAISIFV…PETYSFWLAA (133 aa)) is the Nudix hydrolase domain. Residue Cys65 is part of the active site. Cys65 provides a ligand contact to Mg(2+). A Mn(2+)-binding site is contributed by His67. Residue Glu85 participates in Mg(2+) binding. Mn(2+)-binding residues include Glu110 and Glu112. Glu112 is an active-site residue.

This sequence belongs to the IPP isomerase type 1 family. Mg(2+) is required as a cofactor. Mn(2+) serves as cofactor.

It is found in the cytoplasm. The enzyme catalyses isopentenyl diphosphate = dimethylallyl diphosphate. The protein operates within isoprenoid biosynthesis; dimethylallyl diphosphate biosynthesis; dimethylallyl diphosphate from isopentenyl diphosphate: step 1/1. In terms of biological role, catalyzes the 1,3-allylic rearrangement of the homoallylic substrate isopentenyl (IPP) to its highly electrophilic allylic isomer, dimethylallyl diphosphate (DMAPP). The protein is Isopentenyl-diphosphate Delta-isomerase 2 of Aromatoleum aromaticum (strain DSM 19018 / LMG 30748 / EbN1) (Azoarcus sp. (strain EbN1)).